The following is a 187-amino-acid chain: Phosphatidylethanolamine-binding protein 2 (187 aa).

Ser13, Ser52, and Ser54 each carry phosphoserine.

Belongs to the phosphatidylethanolamine-binding protein family. Testis specific.

It localises to the cytoplasm. Functionally, may bind to phospholipids. May act as serine protease inhibitor. This chain is Phosphatidylethanolamine-binding protein 2 (Pbp2), found in Mus musculus (Mouse).